We begin with the raw amino-acid sequence, 362 residues long: Histidinol-phosphate aminotransferase (362 aa).

Position 219 is an N6-(pyridoxal phosphate)lysine (Lys219).

It belongs to the class-II pyridoxal-phosphate-dependent aminotransferase family. Histidinol-phosphate aminotransferase subfamily. As to quaternary structure, homodimer. Pyridoxal 5'-phosphate is required as a cofactor.

The catalysed reaction is L-histidinol phosphate + 2-oxoglutarate = 3-(imidazol-4-yl)-2-oxopropyl phosphate + L-glutamate. It functions in the pathway amino-acid biosynthesis; L-histidine biosynthesis; L-histidine from 5-phospho-alpha-D-ribose 1-diphosphate: step 7/9. The sequence is that of Histidinol-phosphate aminotransferase from Maricaulis maris (strain MCS10) (Caulobacter maris).